Here is a 145-residue protein sequence, read N- to C-terminus: Endosomal/vacuolar adapter protein YPT35 (145 aa).

The 114-residue stretch at 32-145 (ISDVLVGEHH…STVVREFVLG (114 aa)) folds into the PX domain.

Belongs to the YPT35 family.

The protein resides in the endosome membrane. The protein localises to the vacuole membrane. Its function is as follows. Recruits the lipid transfer protein VPS13 to endosomal and vacuolar membranes. This Meyerozyma guilliermondii (strain ATCC 6260 / CBS 566 / DSM 6381 / JCM 1539 / NBRC 10279 / NRRL Y-324) (Yeast) protein is Endosomal/vacuolar adapter protein YPT35 (YPT35).